The primary structure comprises 578 residues: Tetratricopeptide repeat protein 39A (578 aa).

TPR repeat units lie at residues 280-313 (AIFL…QQHW), 470-503 (CLVK…EKKI), and 511-544 (PNAL…YKNY).

Belongs to the TTC39 family.

This Mus musculus (Mouse) protein is Tetratricopeptide repeat protein 39A (Ttc39a).